The following is a 532-amino-acid chain: Muscarinic acetylcholine receptor M5 (532 aa).

The Extracellular portion of the chain corresponds to 1 to 29 (MEGDSYHNATTVNGTPVNHQPLERHRLWE). N-linked (GlcNAc...) asparagine glycosylation occurs at N8. Residues 30 to 53 (VITIAAVTAVVSLITIVGNVLVMI) traverse the membrane as a helical segment. Over 54–66 (SFKVNSQLKTVNN) the chain is Cytoplasmic. The chain crosses the membrane as a helical span at residues 67–87 (YYLLSLACADLIIGIFSMNLY). Residues 88-104 (TTYILMGRWALGSLACD) are Extracellular-facing. C103 and C183 are disulfide-bonded. A helical transmembrane segment spans residues 105-126 (LWLALDYVASNASVMNLLVISF). The Cytoplasmic segment spans residues 127 to 146 (DRYFSITRPLTYRAKRTPKR). The helical transmembrane segment at 147 to 169 (AGIMIGLAWLISFILWAPAILCW) threads the bilayer. Residues 170-191 (QYLVGKRTVPLDECQIQFLSEP) lie on the Extracellular side of the membrane. The chain crosses the membrane as a helical span at residues 192–214 (TITFGTAIAAFYIPVSVMTILYC). Residues 215 to 443 (RIYRETEKRT…LVKERKAAQT (229 aa)) are Cytoplasmic-facing. Residues 262 to 294 (AQRERNQASWSSSRRSTSTTGKPSQATGPSANW) are disordered. Residues 270–281 (SWSSSRRSTSTT) are compositionally biased toward low complexity. The segment covering 282–291 (GKPSQATGPS) has biased composition (polar residues). A helical transmembrane segment spans residues 444-464 (LSAILLAFIITWTPYNIMVLV). Over 465–478 (STFCDKCVPVTLWH) the chain is Extracellular. Residues 479–498 (LGYWLCYVNSTVNPICYALC) traverse the membrane as a helical segment. Residues 499 to 532 (NRTFRKTFKMLLLCRWKKKKVEEKLYWQGNSKLP) are Cytoplasmic-facing. A phosphothreonine mark is found at T501 and T505.

It belongs to the G-protein coupled receptor 1 family. Muscarinic acetylcholine receptor subfamily. CHRM5 sub-subfamily.

The protein localises to the cell membrane. The protein resides in the postsynaptic cell membrane. In terms of biological role, the muscarinic acetylcholine receptor mediates various cellular responses, including inhibition of adenylate cyclase, breakdown of phosphoinositides and modulation of potassium channels through the action of G proteins. Primary transducing effect is Pi turnover. This is Muscarinic acetylcholine receptor M5 (CHRM5) from Homo sapiens (Human).